Here is a 484-residue protein sequence, read N- to C-terminus: tRNA nucleotidyltransferase cca2 (484 aa).

The B/A element motif lies at 122-124; that stretch reads RAE. Residues 125-142 form a flexible loop region; it reads SYDDKSRIPSVTPGTVET. Residues 234 to 244 carry the ERhxxExxxhh motif motif; the sequence is ERVGEEIEKML.

It belongs to the tRNA nucleotidyltransferase/poly(A) polymerase family.

The protein localises to the cytoplasm. The enzyme catalyses a tRNA with a 3' CC end + ATP = a tRNA with a 3' CCA end + diphosphate. Functionally, tRNA nucleotidyltransferase involved in the synthesis of the tRNA CCA terminus. In contrast to what is usually observed in eukaryotes for which one enzyme synthesizes the whole tRNA CCA terminus, in S.pombe, cca1 specifically adds two cytidine residues to a tRNA substrate lacking this sequence while cca2 specifically adds the terminal adenosine residue thereby completing the CCA sequence. In Schizosaccharomyces pombe (strain 972 / ATCC 24843) (Fission yeast), this protein is tRNA nucleotidyltransferase cca2.